Reading from the N-terminus, the 229-residue chain is DNA repair protein RecO (229 aa).

This sequence belongs to the RecO family.

Its function is as follows. Involved in DNA repair and RecF pathway recombination. The protein is DNA repair protein RecO of Legionella pneumophila (strain Corby).